Consider the following 164-residue polypeptide: Putative pre-16S rRNA nuclease (164 aa).

It belongs to the YqgF nuclease family.

The protein localises to the cytoplasm. Its function is as follows. Could be a nuclease involved in processing of the 5'-end of pre-16S rRNA. The polypeptide is Putative pre-16S rRNA nuclease (Synechococcus sp. (strain CC9902)).